A 164-amino-acid chain; its full sequence is CB1 cannabinoid receptor-interacting protein 1 (164 aa).

It belongs to the CNRIP family. As to quaternary structure, interacts with the cannabinoid receptor CNR1 (via C-terminus). Does not interact with cannabinoid receptor CNR2.

Functionally, suppresses cannabinoid receptor CNR1-mediated tonic inhibition of voltage-gated calcium channels. Does not suppress cannabinoid receptor CNR1-mediated tonic inhibition of voltage-gated calcium channels. This is CB1 cannabinoid receptor-interacting protein 1 (CNRIP1) from Homo sapiens (Human).